The sequence spans 256 residues: Triosephosphate isomerase (256 aa).

Residue 9-11 coordinates substrate; the sequence is NWK. H96 (electrophile) is an active-site residue. Residue E168 is the Proton acceptor of the active site. Substrate contacts are provided by residues S213 and 234–235; that span reads GG.

Belongs to the triosephosphate isomerase family. Homodimer.

The protein localises to the cytoplasm. It carries out the reaction D-glyceraldehyde 3-phosphate = dihydroxyacetone phosphate. It functions in the pathway carbohydrate biosynthesis; gluconeogenesis. It participates in carbohydrate degradation; glycolysis; D-glyceraldehyde 3-phosphate from glycerone phosphate: step 1/1. In terms of biological role, involved in the gluconeogenesis. Catalyzes stereospecifically the conversion of dihydroxyacetone phosphate (DHAP) to D-glyceraldehyde-3-phosphate (G3P). This chain is Triosephosphate isomerase, found in Baumannia cicadellinicola subsp. Homalodisca coagulata.